The chain runs to 156 residues: MAEAKQVLDVTDIQKILPHRYPLLLLDRIIEFKRKERIVAIKNVTINEQFFQGHFPGYPIMPGVLIVEAIAQAGGALLLTEIPDQNEKLMVFAGIEKAKFRKPVVPGDQVRLEVDVIVWRNTAAKLMGKAFVGDKLACEATVSCQIVPRPAKPENS.

Residue H54 is part of the active site.

Belongs to the thioester dehydratase family. FabZ subfamily.

It localises to the cytoplasm. The catalysed reaction is a (3R)-hydroxyacyl-[ACP] = a (2E)-enoyl-[ACP] + H2O. In terms of biological role, involved in unsaturated fatty acids biosynthesis. Catalyzes the dehydration of short chain beta-hydroxyacyl-ACPs and long chain saturated and unsaturated beta-hydroxyacyl-ACPs. The polypeptide is 3-hydroxyacyl-[acyl-carrier-protein] dehydratase FabZ (Koribacter versatilis (strain Ellin345)).